A 369-amino-acid polypeptide reads, in one-letter code: Secondary metabolism regulator laeA (369 aa).

The interval 1–37 is disordered; sequence MFGNGQTGQRLPAMASPPHDSYYSQSLASSRSRNNSD. Over residues 20–37 the composition is skewed to low complexity; that stretch reads DSYYSQSLASSRSRNNSD.

Belongs to the methyltransferase superfamily. LaeA methyltransferase family. Component of the heterotrimeric velvet complex composed of laeA, veA and velB; VeA acting as a bridging protein between laeA and velB. Interacts directly with veA.

It is found in the nucleus. It catalyses the reaction L-methionyl-[protein] + S-adenosyl-L-methionine = S-methyl-L-methionyl-[protein] + S-adenosyl-L-homocysteine. Its function is as follows. Methyltransferase that performs automethylation. No other methyl-accepting substrate has been identified yet. Component of the velvet transcription factor complex that acts as a global regulator for secondary metabolite gene expression. Required for aflR expression and subsequent aflatoxin production. Negatively regulates veA expression. Controls conidiophore and conidial development. Required for hydrophobin production which plays a role in cell surface hydrophobicity and host defense escape. The polypeptide is Secondary metabolism regulator laeA (Aspergillus flavus (strain ATCC 200026 / FGSC A1120 / IAM 13836 / NRRL 3357 / JCM 12722 / SRRC 167)).